A 307-amino-acid polypeptide reads, in one-letter code: MAAITAGLVKELRDKTGAGMMDCKAALTENNGDIEAAIDWLRKKGLAKAAKKAGRVAAEGLVAVESSGHYAAAIEVNAETDFVARNADFQAFVREAAKVALNTDGSIEAVAAAHFPGESVTVADKLATLIATIGENMTLRRSVRLTVSAGVIATYVHGAVSEGQGRIGVLVALESQGDVEKLSTLGRQIAMHVAALNPLALDASGIDEATIAREKAILLEKHQGKPANVQEKIAESGMKTYFKEVTLLEQPFVHDGSKSVAQVLKENEGSVGAPITLKGFVRYALGEGIEKEESDFAAEVAAAAGQS.

An involved in Mg(2+) ion dislocation from EF-Tu region spans residues 80–83 (TDFV).

The protein belongs to the EF-Ts family.

The protein resides in the cytoplasm. Associates with the EF-Tu.GDP complex and induces the exchange of GDP to GTP. It remains bound to the aminoacyl-tRNA.EF-Tu.GTP complex up to the GTP hydrolysis stage on the ribosome. The sequence is that of Elongation factor Ts from Azorhizobium caulinodans (strain ATCC 43989 / DSM 5975 / JCM 20966 / LMG 6465 / NBRC 14845 / NCIMB 13405 / ORS 571).